The sequence spans 971 residues: Isoleucine--tRNA ligase (971 aa).

A 'HIGH' region motif is present at residues 60 to 70 (PYANGDLHIGH). E563 lines the L-isoleucyl-5'-AMP pocket. A 'KMSKS' region motif is present at residues 604–608 (KMSKS). K607 is a binding site for ATP. Residues C922, C925, C942, and C945 each contribute to the Zn(2+) site.

This sequence belongs to the class-I aminoacyl-tRNA synthetase family. IleS type 1 subfamily. In terms of assembly, monomer. Zn(2+) serves as cofactor.

Its subcellular location is the cytoplasm. The catalysed reaction is tRNA(Ile) + L-isoleucine + ATP = L-isoleucyl-tRNA(Ile) + AMP + diphosphate. Catalyzes the attachment of isoleucine to tRNA(Ile). As IleRS can inadvertently accommodate and process structurally similar amino acids such as valine, to avoid such errors it has two additional distinct tRNA(Ile)-dependent editing activities. One activity is designated as 'pretransfer' editing and involves the hydrolysis of activated Val-AMP. The other activity is designated 'posttransfer' editing and involves deacylation of mischarged Val-tRNA(Ile). This Acaryochloris marina (strain MBIC 11017) protein is Isoleucine--tRNA ligase.